The following is a 250-amino-acid chain: Aminoglycoside 3'-phosphotransferase (250 aa).

Asp-178 serves as the catalytic Proton acceptor.

It belongs to the aminoglycoside phosphotransferase family.

It carries out the reaction kanamycin A + ATP = kanamycin 3'-phosphate + ADP + H(+). Its function is as follows. Resistance to kanamycin and structurally-related aminoglycosides, including amikacin. This is Aminoglycoside 3'-phosphotransferase (aphA-7) from Campylobacter jejuni.